The following is a 236-amino-acid chain: Purine nucleoside phosphorylase DeoD-type (236 aa).

His5 lines the a purine D-ribonucleoside pocket. Phosphate-binding positions include Gly21, Arg25, Arg44, and 88 to 91; that span reads RIGS. A purine D-ribonucleoside contacts are provided by residues 180–182 and 204–205; these read EME and SD. Asp205 serves as the catalytic Proton donor.

This sequence belongs to the PNP/UDP phosphorylase family. Homohexamer; trimer of homodimers.

It catalyses the reaction a purine D-ribonucleoside + phosphate = a purine nucleobase + alpha-D-ribose 1-phosphate. The enzyme catalyses a purine 2'-deoxy-D-ribonucleoside + phosphate = a purine nucleobase + 2-deoxy-alpha-D-ribose 1-phosphate. In terms of biological role, catalyzes the reversible phosphorolytic breakdown of the N-glycosidic bond in the beta-(deoxy)ribonucleoside molecules, with the formation of the corresponding free purine bases and pentose-1-phosphate. The chain is Purine nucleoside phosphorylase DeoD-type from Hahella chejuensis (strain KCTC 2396).